We begin with the raw amino-acid sequence, 215 residues long: Myelin protein zero-like protein 2 (215 aa).

The N-terminal stretch at 1–26 is a signal peptide; it reads MYGKSSTRAVLLLLGIQLTALWPIAA. The 115-residue stretch at 27 to 141 folds into the Ig-like V-type domain; that stretch reads VEIYTSRVLE…DGVIGEIRLS (115 aa). The Extracellular portion of the chain corresponds to 27-154; the sequence is VEIYTSRVLE…TVRFSEIHFL (128 aa). Residues Asn-39 and Asn-118 are each glycosylated (N-linked (GlcNAc...) asparagine). Cys-47 and Cys-123 are disulfide-bonded. A helical transmembrane segment spans residues 155-175; it reads ALAIGSACALMIIIVIVVVLF. Residues 176-215 lie on the Cytoplasmic side of the membrane; sequence QHYRKKRWAERAHKVVEIKSKEEERLNQEKKVSVYLEDTD.

It belongs to the myelin P0 protein family. In terms of tissue distribution, widely expressed. In fetal tissues, highest expression in the inner ear. In adult tissues, highest levels in thymus and lung.

The protein resides in the membrane. Functionally, mediates homophilic cell-cell adhesion. The chain is Myelin protein zero-like protein 2 (MPZL2) from Homo sapiens (Human).